The sequence spans 479 residues: 5-hydroxytryptamine receptor 2B (479 aa).

Residues 1–55 (MASSYKMSEQSTTSEHILQKTCDHLILTNRSGLETDSVAEEMKQTVEGQGHTVHW) lie on the Extracellular side of the membrane. N-linked (GlcNAc...) asparagine glycosylation is present at asparagine 29. A helical membrane pass occupies residues 56 to 78 (AALLILAVIIPTIGGNILVILAV). Residues 79-89 (ALEKRLQYATN) are Cytoplasmic-facing. A helical membrane pass occupies residues 90 to 112 (YFLMSLAIADLLVGLFVMPIALL). Residues 113–128 (TIMFEAIWPLPLALCP) lie on the Extracellular side of the membrane. Cysteine 127 and cysteine 206 are oxidised to a cystine. A helical transmembrane segment spans residues 129–150 (AWLFLDVLFSTASIMHLCAISL). The ergotamine site is built by aspartate 134 and threonine 139. A DRY motif; important for ligand-induced conformation changes motif is present at residues 151–153 (DRY). Residues 151 to 170 (DRYIAIKKPIQANQCNSRAT) lie on the Cytoplasmic side of the membrane. Residues 171 to 191 (AFIKITVVWLISIGIAIPVPI) form a helical membrane-spanning segment. Residues 192–215 (KGIETDVINPHNVTCELTKDRFGS) are Extracellular-facing. Leucine 208 serves as a coordination point for ergotamine. Positions 211–214 (DRFG) match the [DE]RFG motif; may stabilize a conformation that preferentially activates signaling via beta-arrestin family members motif. A helical membrane pass occupies residues 216–238 (FMVFGSLAAFFAPLTIMVVTYFL). Topologically, residues 239–323 (TIHTLQKKAY…TISNEQRASK (85 aa)) are cytoplasmic. Residues 324–344 (ALGVVFFLFLLMWCPFFITNL) traverse the membrane as a helical segment. Residues 345–359 (TLALCDSCNQTTLKT) lie on the Extracellular side of the membrane. Cysteine 349 and cysteine 352 are joined by a disulfide. The helical transmembrane segment at 360–381 (LLEIFVWIGYVSSGVNPLIYTL) threads the bilayer. The short motif at 375–379 (NPLIY) is the NPxxY motif; important for ligand-induced conformation changes and signaling element. Over 382 to 479 (FNKTFREAFG…DKAEEQVSYI (98 aa)) the chain is Cytoplasmic. The S-palmitoyl cysteine moiety is linked to residue cysteine 396. The short motif at 477 to 479 (SYI) is the PDZ-binding element.

This sequence belongs to the G-protein coupled receptor 1 family. Interacts (via C-terminus) with MPDZ. As to expression, ubiquitous. Detected in intestine, heart, skeletal muscle, testis, urinary bladder, stomach, liver, lung, brain and kidney. Detected in osteoblasts. Detected in the raphe nucleus in the brain, in dorsal root ganglion neurons, the brain stem, cerebellum and spinal cord. Detected in interstitial cells of Cajal in the small intestine.

The protein localises to the cell membrane. The protein resides in the synapse. It is found in the synaptosome. Functionally, G-protein coupled receptor for 5-hydroxytryptamine (serotonin). Also functions as a receptor for various ergot alkaloid derivatives and psychoactive substances. Ligand binding causes a conformation change that triggers signaling via guanine nucleotide-binding proteins (G proteins) and modulates the activity of downstream effectors. HTR2B is coupled to G(q)/G(11) G alpha proteins and activates phospholipase C-beta, releasing diacylglycerol (DAG) and inositol 1,4,5-trisphosphate (IP3) second messengers that modulate the activity of phosphatidylinositol 3-kinase and promote the release of Ca(2+) ions from intracellular stores, respectively. Beta-arrestin family members inhibit signaling via G proteins and mediate activation of alternative signaling pathways. Plays a role in the regulation of dopamine and 5-hydroxytryptamine release, 5-hydroxytryptamine uptake and in the regulation of extracellular dopamine and 5-hydroxytryptamine levels, and thereby affects neural activity. May play a role in the perception of pain. Plays a role in the regulation of behavior, including impulsive behavior. Required for normal proliferation of embryonic cardiac myocytes and normal heart development. Protects cardiomyocytes against apoptosis. Plays a role in the adaptation of pulmonary arteries to chronic hypoxia. Plays a role in vasoconstriction. Required for normal osteoblast function and proliferation, and for maintaining normal bone density. Required for normal proliferation of the interstitial cells of Cajal in the intestine. The protein is 5-hydroxytryptamine receptor 2B (Htr2b) of Mus musculus (Mouse).